A 54-amino-acid chain; its full sequence is UPF0391 membrane protein Pmen_0080 (54 aa).

Transmembrane regions (helical) follow at residues 4–24 (WALT…GGIA) and 28–48 (AGIA…SFIM).

The protein belongs to the UPF0391 family.

It is found in the cell membrane. The polypeptide is UPF0391 membrane protein Pmen_0080 (Ectopseudomonas mendocina (strain ymp) (Pseudomonas mendocina)).